We begin with the raw amino-acid sequence, 260 residues long: Adenosylcobinamide-GDP ribazoletransferase (260 aa).

Transmembrane regions (helical) follow at residues 40 to 60 (AFPLAGAVLGLLAGAVLFMAY), 64 to 84 (LPPLACAMLAIGALAAMTGAL), 117 to 137 (FAALTLIVFVGLKAALLMTII), 192 to 212 (GIGLAFLVFTLIPAGGFLSLI), 214 to 234 (ALVLATGLLFGFARLCIAKIG), and 240 to 260 (TLGAAQQIGSVAVLAGLVMAL).

Belongs to the CobS family. It depends on Mg(2+) as a cofactor.

It is found in the cell inner membrane. It catalyses the reaction alpha-ribazole + adenosylcob(III)inamide-GDP = adenosylcob(III)alamin + GMP + H(+). The catalysed reaction is alpha-ribazole 5'-phosphate + adenosylcob(III)inamide-GDP = adenosylcob(III)alamin 5'-phosphate + GMP + H(+). It functions in the pathway cofactor biosynthesis; adenosylcobalamin biosynthesis; adenosylcobalamin from cob(II)yrinate a,c-diamide: step 7/7. In terms of biological role, joins adenosylcobinamide-GDP and alpha-ribazole to generate adenosylcobalamin (Ado-cobalamin). Also synthesizes adenosylcobalamin 5'-phosphate from adenosylcobinamide-GDP and alpha-ribazole 5'-phosphate. This chain is Adenosylcobinamide-GDP ribazoletransferase, found in Brucella anthropi (strain ATCC 49188 / DSM 6882 / CCUG 24695 / JCM 21032 / LMG 3331 / NBRC 15819 / NCTC 12168 / Alc 37) (Ochrobactrum anthropi).